We begin with the raw amino-acid sequence, 177 residues long: Isopentenyl-diphosphate Delta-isomerase 1 (177 aa).

The Mn(2+) site is built by His24 and His30. Positions 28–160 (SLHRAISIFI…PHAYSFWLEA (133 aa)) constitute a Nudix hydrolase domain. Cys65 is a catalytic residue. Cys65 is a binding site for Mg(2+). Mn(2+) is bound at residue His67. Glu85 contacts Mg(2+). Residues Glu110 and Glu112 each contribute to the Mn(2+) site. Residue Glu112 is part of the active site.

The protein belongs to the IPP isomerase type 1 family. Mg(2+) serves as cofactor. Mn(2+) is required as a cofactor.

The protein localises to the cytoplasm. The catalysed reaction is isopentenyl diphosphate = dimethylallyl diphosphate. It participates in isoprenoid biosynthesis; dimethylallyl diphosphate biosynthesis; dimethylallyl diphosphate from isopentenyl diphosphate: step 1/1. Functionally, catalyzes the 1,3-allylic rearrangement of the homoallylic substrate isopentenyl (IPP) to its highly electrophilic allylic isomer, dimethylallyl diphosphate (DMAPP). In Aromatoleum aromaticum (strain DSM 19018 / LMG 30748 / EbN1) (Azoarcus sp. (strain EbN1)), this protein is Isopentenyl-diphosphate Delta-isomerase 1.